A 175-amino-acid polypeptide reads, in one-letter code: Adenine phosphoribosyltransferase (175 aa).

This sequence belongs to the purine/pyrimidine phosphoribosyltransferase family. As to quaternary structure, homodimer.

It is found in the cytoplasm. The catalysed reaction is AMP + diphosphate = 5-phospho-alpha-D-ribose 1-diphosphate + adenine. It participates in purine metabolism; AMP biosynthesis via salvage pathway; AMP from adenine: step 1/1. Functionally, catalyzes a salvage reaction resulting in the formation of AMP, that is energically less costly than de novo synthesis. The protein is Adenine phosphoribosyltransferase of Synechococcus sp. (strain CC9902).